The chain runs to 153 residues: Aspartate carbamoyltransferase regulatory chain (153 aa).

Residues Cys-109, Cys-114, Cys-138, and Cys-141 each coordinate Zn(2+).

Belongs to the PyrI family. As to quaternary structure, contains catalytic and regulatory chains. It depends on Zn(2+) as a cofactor.

Involved in allosteric regulation of aspartate carbamoyltransferase. In Wigglesworthia glossinidia brevipalpis, this protein is Aspartate carbamoyltransferase regulatory chain.